A 339-amino-acid chain; its full sequence is Hairy/enhancer-of-split related with YRPW motif protein 2 (339 aa).

A disordered region spans residues 1 to 52; it reads MKRPCEETTSESDLDETIDVGSENNYPGHATSSVMRSNSPTTTSQIMARKKR. Positions 8-18 are enriched in acidic residues; that stretch reads TTSESDLDETI. Over residues 22-46 the composition is skewed to polar residues; sequence SENNYPGHATSSVMRSNSPTTTSQI. The tract at residues 47–116 is transcriptional repression and interaction with NCOR1 and SIN3A; it reads MARKKRRGII…GGKGYFDAHA (70 aa). The bHLH domain maps to 48-103; it reads ARKKRRGIIEKRRRDRINNSLSELRRLVPTAFEKQGSAKLEKAEILQMTVDHLKML. The region spanning 122–157 is the Orange domain; the sequence is MSIGFRECLTEVARYLSSVEGLDPSDPLRVRLVSHL. Positions 310–339 are disordered; sequence SVSAASSPQQTSTGTNNKPYQPWGTEVGAF. A compositionally biased stretch (polar residues) spans 318–328; it reads QQTSTGTNNKP. Residues 329–332 carry the YQPW motif motif; sequence YQPW.

This sequence belongs to the HEY family. In terms of assembly, may self-associate. Interacts with ARNT. Interacts with GATA4, GATA6, HES1 and HEYL. Interacts with HDAC1, NCOR1 and SIN3A. Highly expressed in the aorta, lower expression detected in the heart, brain, kidney, lung, muscle, ovary and testis.

The protein localises to the nucleus. In terms of biological role, transcriptional repressor which functions as a downstream effector of Notch signaling in cardiovascular development. Specifically required for the Notch-induced endocardial epithelial to mesenchymal transition, which is itself criticial for cardiac valve and septum development. May be required in conjunction with HEY1 to specify arterial cell fate or identity. Promotes maintenance of neuronal precursor cells and glial versus neuronal fate specification. Binds preferentially to the canonical E box sequence 5'-CACGTG-3'. Represses transcription by the cardiac transcriptional activators GATA4 and GATA6 and by the neuronal bHLH factors ASCL1/MASH1 and NEUROD4/MATH3. This Mus musculus (Mouse) protein is Hairy/enhancer-of-split related with YRPW motif protein 2 (Hey2).